The chain runs to 469 residues: Probable Xaa-Pro aminopeptidase PEPP (469 aa).

Residues Asp264, Asp275, Glu398, and Glu438 each contribute to the Mn(2+) site.

It belongs to the peptidase M24B family. Requires Mn(2+) as cofactor.

The enzyme catalyses Release of any N-terminal amino acid, including proline, that is linked to proline, even from a dipeptide or tripeptide.. Catalyzes the removal of a penultimate prolyl residue from the N-termini of peptides. The polypeptide is Probable Xaa-Pro aminopeptidase PEPP (PEPP) (Ajellomyces capsulatus (strain G186AR / H82 / ATCC MYA-2454 / RMSCC 2432) (Darling's disease fungus)).